The chain runs to 520 residues: MVLMILPFIGSVSVSESLVALTTVCLVYLILKFFRTEIPEGLHRLPGPKPLPLIGNVLEVGNKPYLSLTAMSKRYGDVFRFRLGMRPSGCLSGSETVRKALIKQGDEFAGRPDLYSFRFINDGKSLAFSTDKAGVWRALRKLAYSALRSFSSLEESTPRDSCVLEEHSAKEGEYLYSNMLNAVMKVTGSFDPFRHIVVSVANVICGMCFGRRYGHNDQELLSLVNLSDPFGQVVGSGNPADFIPVLQFLPSTTMKNFMDINARFNKFVQKIVSEHYTTYDKDNIRDITDSLIDHCEDRKLDENANVQMSDEKIVGIVNDLFGAGFDTISTALSWSVMYLVAYPEIEERLYQELKENVGLDRTPLLCDRPNLPFLEAFILEIFRHSSFLPFTIPHCTSKDTSLNGYFIPKDTCVFINQWQINHDPELWKDPSSFNPDRFLSADGTELNKLEGEKVMVFGLGKRRCIGEVIARNGVFLFLAIIVQKLHFKTLPGEPLDMTPEYGLTMKHKRCHLRATMRASE.

F230 lines the substrate pocket. C464 is a heme binding site.

The protein belongs to the cytochrome P450 family. Requires heme as cofactor.

The protein localises to the endoplasmic reticulum membrane. It is found in the microsome membrane. The catalysed reaction is an organic molecule + reduced [NADPH--hemoprotein reductase] + O2 = an alcohol + oxidized [NADPH--hemoprotein reductase] + H2O + H(+). Its function is as follows. Cytochromes P450 are a group of heme-thiolate monooxygenases. In liver microsomes, this enzyme is involved in an NADPH-dependent electron transport pathway. It oxidizes a variety of structurally unrelated compounds, including steroids, fatty acids, and xenobiotics. The polypeptide is Cytochrome P450 1A1 (cyp1a1) (Dicentrarchus labrax (European seabass)).